A 249-amino-acid polypeptide reads, in one-letter code: Tegument protein UL51 homolog (249 aa).

It belongs to the herpesviridae UL51 family. In terms of assembly, oligomerizes. Interacts with MDV019; this interaction mediates MDV019 incorporation to virions. In terms of processing, phosphorylated.

It localises to the virion tegument. The protein resides in the host cytoplasm. Its subcellular location is the host Golgi apparatus. Plays several roles during the time course of infection, including egress of virus particles from the perinuclear space and secondary envelopment of cytoplasmic capsids that bud into specific trans-Golgi network (TGN)-derived membranes. The polypeptide is Tegument protein UL51 homolog (MDV065) (Gallus gallus (Chicken)).